A 402-amino-acid chain; its full sequence is MQRRKLVEISIFVIRKSNFSSSIKSLTNLDVDVSVDNDEDPLYADVPKPPKDKSERKPYPTPMKELIRRAKEEKQLRKLQPCRVLEDPPDNGLLVPELVDVAHCVHRCRNMLLSGLSKIIHHVPVHRCRLCAEVHIGKQGHEIRTCTGPGSGSRSATHVWKRGRVSDVVLFPKCFHLYDRAVKPRVIHDERFTVPKISAVLELCIQAGVDLEKFPSKRRSKPVYSIEGRIVDFEDVNDGNSELAVTSTTTLIQEDDRCKEEKKSLKELSFETMESWFEMVLGVRKLMERYRVWTCGYCPEIQVGPKGHKVRMCKATKHQMRDGMHAWQEATIDDVVGPTYVWHVRDPTDGSVLDNSLKRFYGKAPAVIEMCVQGGAPVPDQYNSMMRLDVVYPQRDEVDLVA.

Residues 1–13 constitute a mitochondrion transit peptide; sequence MQRRKLVEISIFV. Positions 37–59 are disordered; the sequence is NDEDPLYADVPKPPKDKSERKPY. The span at 48-58 shows a compositional bias: basic and acidic residues; sequence KPPKDKSERKP. 2 consecutive APO domains span residues 127 to 213 and 294 to 380; these read RCRL…DLEK and TCGY…PVPD.

This sequence belongs to the APO family.

The protein localises to the mitochondrion. Its function is as follows. May be involved in the stable assembly of several 4Fe-4S cluster-containing complexes of mitochondria. This is APO protein 3, mitochondrial (APO3) from Arabidopsis thaliana (Mouse-ear cress).